We begin with the raw amino-acid sequence, 177 residues long: Large ribosomal subunit protein uL6 (177 aa).

It belongs to the universal ribosomal protein uL6 family. As to quaternary structure, part of the 50S ribosomal subunit.

Functionally, this protein binds to the 23S rRNA, and is important in its secondary structure. It is located near the subunit interface in the base of the L7/L12 stalk, and near the tRNA binding site of the peptidyltransferase center. The polypeptide is Large ribosomal subunit protein uL6 (Variovorax paradoxus (strain S110)).